A 314-amino-acid chain; its full sequence is Putative peptide transport system permease protein BRA1092/BS1330_II1084 (314 aa).

6 helical membrane-spanning segments follow: residues 12 to 32 (AIPV…LLPG), 101 to 121 (LALL…VVAA), 135 to 155 (LALL…VILF), 177 to 197 (WLRS…GYLA), 237 to 257 (VSVL…SVVI), and 286 to 306 (MLFL…LYTI). Residues 95–304 (LPVTISLALL…AINVLVDILY (210 aa)) form the ABC transmembrane type-1 domain.

This sequence belongs to the binding-protein-dependent transport system permease family. The complex is composed of two ATP-binding proteins (BRA1094), two transmembrane proteins (BRA1092 and BRA1093) and a solute-binding protein (BRA1090).

It localises to the cell inner membrane. In terms of biological role, probably part of an ABC transporter complex that could be involved in peptide import. Probably responsible for the translocation of the substrate across the membrane. This chain is Putative peptide transport system permease protein BRA1092/BS1330_II1084, found in Brucella suis biovar 1 (strain 1330).